We begin with the raw amino-acid sequence, 1404 residues long: DNA-directed RNA polymerase subunit beta' (1404 aa).

4 residues coordinate Zn(2+): cysteine 70, cysteine 72, cysteine 85, and cysteine 88. Aspartate 460, aspartate 462, and aspartate 464 together coordinate Mg(2+). Cysteine 814, cysteine 888, cysteine 895, and cysteine 898 together coordinate Zn(2+).

This sequence belongs to the RNA polymerase beta' chain family. The RNAP catalytic core consists of 2 alpha, 1 beta, 1 beta' and 1 omega subunit. When a sigma factor is associated with the core the holoenzyme is formed, which can initiate transcription. Mg(2+) is required as a cofactor. The cofactor is Zn(2+).

The enzyme catalyses RNA(n) + a ribonucleoside 5'-triphosphate = RNA(n+1) + diphosphate. Functionally, DNA-dependent RNA polymerase catalyzes the transcription of DNA into RNA using the four ribonucleoside triphosphates as substrates. This Shewanella pealeana (strain ATCC 700345 / ANG-SQ1) protein is DNA-directed RNA polymerase subunit beta'.